A 270-amino-acid polypeptide reads, in one-letter code: UPF0354 protein BCA_4815 (270 aa).

Belongs to the UPF0354 family.

The polypeptide is UPF0354 protein BCA_4815 (Bacillus cereus (strain 03BB102)).